Consider the following 307-residue polypeptide: uncharacterized protein (307 aa).

The 58-residue stretch at 11 to 68 (IRLRHLHTFVAVAQQGTLGRAAETLNLSQPALSKTLNELEQLTGARLFERGRQGAQLT) folds into the HTH lysR-type domain. A DNA-binding region (H-T-H motif) is located at residues 28-47 (LGRAAETLNLSQPALSKTLN).

It belongs to the LysR transcriptional regulatory family.

This is an uncharacterized protein from Escherichia coli (strain K12).